The sequence spans 419 residues: Mitochondrial chaperone BCS1 (419 aa).

Over 1–15 the chain is Mitochondrial intermembrane; sequence MPLSDFVLALKDNPY. The helical transmembrane segment at 16 to 32 threads the bilayer; that stretch reads FGAGFGLVGVGTALALA. The Mitochondrial matrix segment spans residues 33-419; the sequence is RKGAQLGLVA…AIQNAESLRR (387 aa). Residue tyrosine 181 is modified to Phosphotyrosine. An ATP-binding site is contributed by 230 to 237; sequence GPPGCGKS.

The protein belongs to the AAA ATPase family. BCS1 subfamily. Interacts with LETM1.

Its subcellular location is the mitochondrion inner membrane. It carries out the reaction ATP + H2O = ADP + phosphate + H(+). Functionally, chaperone necessary for the incorporation of Rieske iron-sulfur protein UQCRFS1 into the mitochondrial respiratory chain complex III. Plays an important role in the maintenance of mitochondrial tubular networks, respiratory chain assembly and formation of the LETM1 complex. In Bos taurus (Bovine), this protein is Mitochondrial chaperone BCS1 (BCS1L).